The following is a 97-amino-acid chain: uncharacterized protein (97 aa).

This is an uncharacterized protein from Escherichia coli O157:H7.